The chain runs to 191 residues: Retinin (191 aa).

The N-terminal stretch at 1 to 21 (MSRLFLPVLAIVLVSIGASHT) is a signal peptide. The disordered stretch occupies residues 52 to 88 (LADGSSGSVSSSAAQPEDQSQEEAEEQQVSSASSGSA). Composition is skewed to low complexity over residues 55-69 (GSSGSVSSSAAQPED) and 78-88 (QQVSSASSGSA).

Phosphorylated. As to expression, specifically expressed in cornea (at protein level). Detected in retina and cortex.

It localises to the secreted. The protein is Retinin of Drosophila melanogaster (Fruit fly).